The following is a 212-amino-acid chain: Glycerol-3-phosphate acyltransferase (212 aa).

Helical transmembrane passes span 3-23 (ILLA…VVVS), 78-98 (DVAV…PVFF), 115-135 (AVHP…AFFF), and 155-177 (FLFG…LLVW).

This sequence belongs to the PlsY family. Probably interacts with PlsX.

Its subcellular location is the cell inner membrane. It catalyses the reaction an acyl phosphate + sn-glycerol 3-phosphate = a 1-acyl-sn-glycero-3-phosphate + phosphate. It functions in the pathway lipid metabolism; phospholipid metabolism. In terms of biological role, catalyzes the transfer of an acyl group from acyl-phosphate (acyl-PO(4)) to glycerol-3-phosphate (G3P) to form lysophosphatidic acid (LPA). This enzyme utilizes acyl-phosphate as fatty acyl donor, but not acyl-CoA or acyl-ACP. The sequence is that of Glycerol-3-phosphate acyltransferase from Burkholderia lata (strain ATCC 17760 / DSM 23089 / LMG 22485 / NCIMB 9086 / R18194 / 383).